Here is a 458-residue protein sequence, read N- to C-terminus: 3-isopropylmalate dehydratase large subunit (458 aa).

Residues Cys339, Cys399, and Cys402 each contribute to the [4Fe-4S] cluster site.

It belongs to the aconitase/IPM isomerase family. LeuC type 1 subfamily. As to quaternary structure, heterodimer of LeuC and LeuD. [4Fe-4S] cluster is required as a cofactor.

The enzyme catalyses (2R,3S)-3-isopropylmalate = (2S)-2-isopropylmalate. It functions in the pathway amino-acid biosynthesis; L-leucine biosynthesis; L-leucine from 3-methyl-2-oxobutanoate: step 2/4. Catalyzes the isomerization between 2-isopropylmalate and 3-isopropylmalate, via the formation of 2-isopropylmaleate. The chain is 3-isopropylmalate dehydratase large subunit from Lactococcus lactis subsp. cremoris (strain SK11).